The sequence spans 236 residues: Small ribosomal subunit protein uS2c (236 aa).

It belongs to the universal ribosomal protein uS2 family.

The protein localises to the plastid. Its subcellular location is the chloroplast. This chain is Small ribosomal subunit protein uS2c (rps2), found in Amborella trichopoda.